The sequence spans 583 residues: NudC domain-containing protein 1 (583 aa).

Position 8 is a phosphoserine (S8). The CS domain maps to 273–361 (IKEPLYYWQQ…NEGLTWPELV (89 aa)). S388 carries the post-translational modification Phosphoserine.

As to expression, isoform 1 is specifically expressed in leukemias and a variety of solid tumor cell lines and is also detected in testis and heart. Isoform 2 is predominantly expressed in testis and weakly expressed in tumor cells.

Its subcellular location is the cytoplasm. It localises to the nucleus. In Homo sapiens (Human), this protein is NudC domain-containing protein 1.